A 1572-amino-acid chain; its full sequence is E3 ubiquitin-protein ligase HECW2 (1572 aa).

A Phosphoserine modification is found at Ser48. A C2 domain is found at 167-301 (GAEGMEGGAS…QAIGDQMLSY (135 aa)). Disordered regions lie at residues 341–452 (VNSV…SSFP) and 489–796 (IMFS…PSVR). Positions 400–410 (TSTSSRTSPPR) are enriched in low complexity. Residues 518–532 (ASTHEAASFEDKPEN) show a composition bias toward basic and acidic residues. Composition is skewed to polar residues over residues 572 to 588 (EVDQ…SDAS), 597 to 614 (ETES…SSET), 643 to 664 (SSCN…SSLE), and 688 to 703 (PTSS…SVCT). The interval 737-1068 (WQRRGSLEGA…PRPSSTFNTV (332 aa)) is interaction with TP73. Positions 744-776 (EGAAAAAESPPQEEGSAGEAQGTCEGATAQEEG) are enriched in low complexity. One can recognise a WW 1 domain in the interval 807-840 (EALPPNWEARIDSHGRIFYVDHVNRTTTWQRPTA). Positions 847–874 (LQRSNSIQQMEQLNRRYQSIRRTMTNER) form a coiled coil. Residues Ser852 and Ser909 each carry the phosphoserine modification. A WW 2 domain is found at 985-1018 (LELPRGWEMKHDHQGKAFFVDHNSRTTTFIDPRL). 2 disordered regions span residues 1024–1069 (RPTS…NTVS) and 1161–1187 (CQSP…RAPA). Residues 1031–1040 (HRQHLTRQRS) are compositionally biased toward basic residues. A compositionally biased stretch (polar residues) spans 1161–1181 (CQSPRGSPVSSPQNSPGTQRA). A Phosphoserine modification is found at Ser1175. The HECT domain occupies 1237-1572 (SRKDLQRNKL…VEETSTFGLE (336 aa)). The active-site Glycyl thioester intermediate is the Cys1540.

As to quaternary structure, interacts with TP73. Interacts with FZR1. Post-translationally, ubiquitinated and degraded during mitotic exit by APC/C-Cdh1. Predominantly expressed in adult brain, lung and heart.

Its subcellular location is the cytoplasm. The protein localises to the cytoskeleton. It localises to the spindle. It catalyses the reaction S-ubiquitinyl-[E2 ubiquitin-conjugating enzyme]-L-cysteine + [acceptor protein]-L-lysine = [E2 ubiquitin-conjugating enzyme]-L-cysteine + N(6)-ubiquitinyl-[acceptor protein]-L-lysine.. Its pathway is protein modification; protein ubiquitination. E3 ubiquitin-protein ligase that mediates ubiquitination of TP73. Acts to stabilize TP73 and enhance activation of transcription by TP73. Involved in the regulation of mitotic metaphase/anaphase transition. The sequence is that of E3 ubiquitin-protein ligase HECW2 (HECW2) from Homo sapiens (Human).